The following is a 369-amino-acid chain: MKYKRIVFKVGTSSLTNEDGSLSRSKVKDITQQLAMLHEAGHELILVSSGAIAAGFGALGFKKRPTKIADKQASAAVGQGLLLEEYTTNLLLRQIVSAQILLTQDDFVDKRRYKNAHQALSVLLNRGAIPIINENDSVVIDELKVGDNDTLSAQVAAMVQADLLVFLTDVDGLYTGNPNSDPRAKRLERIETINREIIDMAGGAGSSNGTGGMLTKIKAATIATESGVPVYICSSLKSDSMIEAAEETEDGSYFVAQEKGLRTQKQWLAFYAQSQGSIWVDKGAAEALSQHGKSLLLSGIVEAEGAFSYGDIVTVFDKESGKSLGKGRVQFGASALEDMLRSQKAKGVLIYRDDWISITPEIQLLFTEF.

Lysine 9 is an ATP binding site. 3 residues coordinate substrate: serine 49, aspartate 136, and asparagine 148. ATP-binding positions include 168 to 169 and 210 to 216; these read TD and TGGMLTK. In terms of domain architecture, PUA spans 275–355; sequence QGSIWVDKGA…KGVLIYRDDW (81 aa).

The protein belongs to the glutamate 5-kinase family.

The protein resides in the cytoplasm. The catalysed reaction is L-glutamate + ATP = L-glutamyl 5-phosphate + ADP. It participates in amino-acid biosynthesis; L-proline biosynthesis; L-glutamate 5-semialdehyde from L-glutamate: step 1/2. Its function is as follows. Catalyzes the transfer of a phosphate group to glutamate to form L-glutamate 5-phosphate. The polypeptide is Glutamate 5-kinase (Streptococcus pneumoniae (strain 70585)).